A 115-amino-acid polypeptide reads, in one-letter code: Large ribosomal subunit protein bL19 (115 aa).

This sequence belongs to the bacterial ribosomal protein bL19 family.

In terms of biological role, this protein is located at the 30S-50S ribosomal subunit interface and may play a role in the structure and function of the aminoacyl-tRNA binding site. This chain is Large ribosomal subunit protein bL19 (rplS), found in Buchnera aphidicola subsp. Acyrthosiphon pisum (strain APS) (Acyrthosiphon pisum symbiotic bacterium).